We begin with the raw amino-acid sequence, 350 residues long: Dihydroorotase (350 aa).

2 residues coordinate Zn(2+): H17 and H19. Residues H19–R21 and N45 each bind substrate. Residues K103, H140, and H178 each contribute to the Zn(2+) site. K103 carries the post-translational modification N6-carboxylysine. H140 lines the substrate pocket. L224 is a binding site for substrate. A Zn(2+)-binding site is contributed by D252. Residue D252 is part of the active site. Substrate-binding residues include H256 and A268.

This sequence belongs to the metallo-dependent hydrolases superfamily. DHOase family. Class II DHOase subfamily. As to quaternary structure, homodimer. It depends on Zn(2+) as a cofactor.

The enzyme catalyses (S)-dihydroorotate + H2O = N-carbamoyl-L-aspartate + H(+). It participates in pyrimidine metabolism; UMP biosynthesis via de novo pathway; (S)-dihydroorotate from bicarbonate: step 3/3. Functionally, catalyzes the reversible cyclization of carbamoyl aspartate to dihydroorotate. In Buchnera aphidicola subsp. Acyrthosiphon pisum (strain APS) (Acyrthosiphon pisum symbiotic bacterium), this protein is Dihydroorotase.